The chain runs to 396 residues: L-lactate dehydrogenase (396 aa).

Residues 1–380 (MIISAASDYR…SGDSLVQELG (380 aa)) form the FMN hydroxy acid dehydrogenase domain. Tyr-24 contacts substrate. FMN contacts are provided by Ser-106 and Gln-127. Tyr-129 lines the substrate pocket. Position 155 (Thr-155) interacts with FMN. A substrate-binding site is contributed by Arg-164. Position 251 (Lys-251) interacts with FMN. Residue His-275 is the Proton acceptor of the active site. A substrate-binding site is contributed by Arg-278. 306–330 (DSGIRNGLDVVRMIALGADTVLLGR) contributes to the FMN binding site.

The protein belongs to the FMN-dependent alpha-hydroxy acid dehydrogenase family. FMN serves as cofactor.

The protein localises to the cell inner membrane. It catalyses the reaction (S)-lactate + A = pyruvate + AH2. Catalyzes the conversion of L-lactate to pyruvate. Is coupled to the respiratory chain. The sequence is that of L-lactate dehydrogenase from Salmonella schwarzengrund (strain CVM19633).